Consider the following 940-residue polypeptide: Gamma-aminobutyric acid type B receptor subunit 2 (940 aa).

Residues 1 to 40 form the signal peptide; sequence MASPPSSGQPRPPPPPPPPARLLLPLLLSLLLWLAPGAWG. The Extracellular segment spans residues 41–482; it reads WTRGAPRPPP…LRKISLPLYS (442 aa). Residue N89 is glycosylated (N-linked (GlcNAc...) asparagine). 3 disulfide bridges follow: C107–C134, C236–C265, and C264–C301. N-linked (GlcNAc...) asparagine glycosylation is found at N297, N388, N403, and N452. Residues 483 to 503 traverse the membrane as a helical segment; it reads ILSALTILGMIMASAFLFFNI. The Cytoplasmic portion of the chain corresponds to 504–521; it reads KNRNQKLIKMSSPYMNNL. Residues 522 to 542 form a helical membrane-spanning segment; the sequence is IILGGMLSYASIFLFGLDGSF. Over 543–550 the chain is Extracellular; it reads VSEKTFET. A helical membrane pass occupies residues 551 to 571; the sequence is LCTVRTWILTVGYTTAFGAMF. Residues 572-596 lie on the Cytoplasmic side of the membrane; that stretch reads AKTWRVHAIFKNVKMKKKIIKDQKL. A helical membrane pass occupies residues 597 to 617; it reads LVIVGGMLLIDLCILICWQAV. The Extracellular portion of the chain corresponds to 618-653; that stretch reads DPLRRTVERYSMEPDPAGRDISIRPLLEHCENTHMT. A helical membrane pass occupies residues 654–674; that stretch reads IWLGIVYAYKGLLMLFGCFLA. Residues 675–690 are Cytoplasmic-facing; it reads WETRNVSIPALNDSKY. Residues 691–711 traverse the membrane as a helical segment; that stretch reads IGMSVYNVGIMCIIGAAVSFL. Residues 712–719 lie on the Extracellular side of the membrane; it reads TRDQPNVQ. The helical transmembrane segment at 720-740 threads the bilayer; sequence FCIVALVIIFCSTITLCLVFV. Residues 741–940 lie on the Cytoplasmic side of the membrane; that stretch reads PKLITLRTNP…PSFRVMVSGL (200 aa). Residues 762–789 form a disordered region; that stretch reads TQNQKKEDSKTSTSVTSVNQASTSRLEG. Residues 772–786 are compositionally biased toward polar residues; it reads TSTSVTSVNQASTSR. Residues S775 and S778 each carry the phosphoserine modification. Positions 780–818 form a coiled coil; that stretch reads NQASTSRLEGLQSENHRLRMKITELDKDLEEVTMQLQDT. Position 818 is a phosphothreonine (T818). A phosphoserine mark is found at S883, S892, S912, S915, S919, and S923.

It belongs to the G-protein coupled receptor 3 family. GABA-B receptor subfamily. Heterodimer of GABBR1 and GABBR2. Homodimers may form, but are inactive. Interacts (via C-terminus) with ATF4 (via leucine zipper domain). Interacts with KCTD8, KCTD12 and KCTD16; this interaction determines the pharmacology and kinetics of the receptor response, the KCTD proteins markedly accelerating the GABA-B response, although to different extents. In terms of tissue distribution, highly expressed in areas of the brain including thalamic nuclei, the hippocampus, cerebellar Purkinje cells and the medial habenula, and moderately expressed in the cerebral cortex, certain anterioventral thalamic nuclei, dorsal medial hypothalamic nucleus and suprachiasmatic nuclei. Also weakly expressed in the testis.

The protein resides in the cell membrane. It localises to the postsynaptic cell membrane. It is found in the perikaryon. Its subcellular location is the cell projection. The protein localises to the dendrite. Component of a heterodimeric G-protein coupled receptor for GABA, formed by GABBR1 and GABBR2. Within the heterodimeric GABA receptor, only GABBR1 seems to bind agonists, while GABBR2 mediates coupling to G proteins. Ligand binding causes a conformation change that triggers signaling via guanine nucleotide-binding proteins (G proteins) and modulates the activity of down-stream effectors, such as adenylate cyclase. Signaling inhibits adenylate cyclase, stimulates phospholipase A2, activates potassium channels, inactivates voltage-dependent calcium-channels and modulates inositol phospholipid hydrolysis. Plays a critical role in the fine-tuning of inhibitory synaptic transmission. Pre-synaptic GABA receptor inhibits neurotransmitter release by down-regulating high-voltage activated calcium channels, whereas postsynaptic GABA receptor decreases neuronal excitability by activating a prominent inwardly rectifying potassium (Kir) conductance that underlies the late inhibitory postsynaptic potentials. Not only implicated in synaptic inhibition but also in hippocampal long-term potentiation, slow wave sleep, muscle relaxation and antinociception. This chain is Gamma-aminobutyric acid type B receptor subunit 2 (Gabbr2), found in Rattus norvegicus (Rat).